The chain runs to 809 residues: MAEEPRAPEALSSTFMLNMTSDASVRRIVRRIGTLARRRVQQLPDMETFSPEFDPELSEPPFLPFSAYVITGTAGAGKSTSVSCLHHTMDCLVTGATTVAAQNLSQTLRAYCPTVYSAFGFKSRHINMTQRVSSHGRSTDAALEELQRRDLAKYWPVLSDIAAEFRRTKPRGLYSGVSGPAFEVLRDMHQGQLWTTNVIVVDEAGTLSVHILTAVVFCYWFFNAWLRTPLYRRGRIPCIVCVGSPTQTDAFQSSFSHETQVNKIRECDNILTFLVGNPRAATYVDVARNWALFINNKRCTDVQFGHLMKTLEYGLELSPDILAYVDRFVVPRAAIMDPAQYVGWTRLFLSHAEVKTFLTTLHATLKTAGQGRAARGTGGDGGGVTMFTCPVECEVFLDPLAQYKTLVGLPGLTAHTWLQKNYARLGNYSQFADQDMVPVGTEQDEERVKVTYNVTYVKHSSVSVNCKTKKSICGYTGTFGDFMDTLEADSFVEAHGHEQPEYVYSFLARLIYGGIYAFSHGGHSLCENGEYVAELGAVPLPGRTWDPEVTAGMELGELPLEVAWDGERSPAAVFYARVLAPPAANSAPLCSLLNIYNDLRAYFRQCLDVAVRYGGREFRDLPFCTFTNNMLIRDNIEFTSDEPLLHGLLDYASTTENYTLLGYTHLNVFFGIRGKQQPQDAGSSRMPRLMVKDEAGFVCCLEHNTNKLYETIEDKSLNLCSIRDYGISSKLAMTIAKAQGLSLNKVAICFGSHRNIKPGHVYVALSRARHSNCVVMDRNPLSEMITGEGNPASGYIVDALKNSRALLVY.

Position 72-79 (72-79 (GTAGAGKS)) interacts with ATP.

It belongs to the herpesviridae helicase family. Associates with the primase and the primase-associated factor to form the helicase-primase complex.

The protein resides in the host nucleus. Its function is as follows. Component of the helicase/primase complex. Unwinds the DNA at the replication forks and generates single-stranded DNA for both leading and lagging strand synthesis. The primase synthesizes short RNA primers on the lagging strand that the polymerase elongates using dNTPs. Possesses helicase-like motifs and therefore may act as the helicase subunit of the complex. The sequence is that of DNA replication helicase from Epstein-Barr virus (strain B95-8) (HHV-4).